The primary structure comprises 222 residues: PKHD-type hydroxylase Syncc9605_1577 (222 aa).

The region spanning Lys80–Ser175 is the Fe2OG dioxygenase domain. Residues His98, Asp100, and His156 each coordinate Fe cation. Residue Arg166 coordinates 2-oxoglutarate.

Fe(2+) serves as cofactor. It depends on L-ascorbate as a cofactor.

This is PKHD-type hydroxylase Syncc9605_1577 from Synechococcus sp. (strain CC9605).